The sequence spans 349 residues: N-acetyltaurine hydrolase (349 aa).

A divalent metal cation-binding residues include His-26, His-28, Glu-169, His-201, His-230, and Asp-298.

Belongs to the metallo-dependent hydrolases superfamily. Phosphotriesterase family. Requires a divalent metal cation as cofactor.

The protein resides in the cytoplasm. It is found in the cytosol. It carries out the reaction N-acetyltaurine + H2O = taurine + acetate. It catalyses the reaction N-propanoyltaurine + H2O = propanoate + taurine. The catalysed reaction is N-acetyl-L-methionine + H2O = L-methionine + acetate. The enzyme catalyses N-acetyl-L-isoleucine + H2O = L-isoleucine + acetate. It carries out the reaction N-acetyl-L-leucine + H2O = L-leucine + acetate. It catalyses the reaction N-acetyl-L-valine + H2O = L-valine + acetate. Functionally, N-acetyltaurine hydrolase that regulates feeding by catalyzing the hydrolysis of N-acetyltaurine into taurine and acetate. N-acetyltaurine has anorexigenic and anti-obesity effects that are dependent on GFRAL receptor and GDF15. PTER also acts on other N-acetyl amino acids (Met, Ile, Leu, Val) and N-propionyltaurine, but at lower rates. This Homo sapiens (Human) protein is N-acetyltaurine hydrolase.